A 936-amino-acid polypeptide reads, in one-letter code: Protocadherin gamma-A10 (936 aa).

The signal sequence occupies residues 1–32 (MAAQRNRSKESKDCSGLVLLCLFFGIPWEAGA). Cadherin domains are found at residues 33–137 (RQIS…APKF), 138–246 (QAEN…APVF), 247–351 (TLPE…SPEL), 352–456 (TITS…PPTF), 457–566 (SQVS…APEI), and 574–687 (DGST…SPAN). At 33 to 696 (RQISYSIPEE…NSETSDLTLY (664 aa)) the chain is on the extracellular side. N-linked (GlcNAc...) asparagine glycosylation is present at N51. 2 N-linked (GlcNAc...) asparagine glycosylation sites follow: N423 and N549. The chain crosses the membrane as a helical span at residues 697–717 (LVVAVAAVSCVFLAFVIVLLA). The Cytoplasmic portion of the chain corresponds to 718–936 (HRLRRWHKSR…KKKSGKKEKK (219 aa)). Disordered regions lie at residues 806 to 845 (EDTP…WPNN) and 906 to 936 (ATLT…KEKK). The segment covering 820-845 (WRFSQAQRPGTSGSQNGDDTGTWPNN) has biased composition (polar residues). Positions 926-936 (NKKKSGKKEKK) are enriched in basic residues.

It is found in the cell membrane. Functionally, potential calcium-dependent cell-adhesion protein. May be involved in the establishment and maintenance of specific neuronal connections in the brain. This Homo sapiens (Human) protein is Protocadherin gamma-A10 (PCDHGA10).